The primary structure comprises 72 residues: MALPKRRLSHSRQGNHRAHVALTAPAVMECPQCNSPKLSHQACSVCGTYNGRTVIDMEAIAKKKADKSKGQQ.

The protein belongs to the bacterial ribosomal protein bL32 family.

This is Large ribosomal subunit protein bL32 from Dehalococcoides mccartyi (strain ATCC BAA-2100 / JCM 16839 / KCTC 5957 / BAV1).